The following is a 430-amino-acid chain: Adenylosuccinate synthetase (430 aa).

Residues 13 to 19 and 41 to 43 each bind GTP; these read GDEGKGK and GHT. The active-site Proton acceptor is Asp-14. The Mg(2+) site is built by Asp-14 and Gly-41. IMP is bound by residues 14-17, 39-42, Thr-130, Arg-144, Gln-225, Thr-240, and Arg-304; these read DEGK and NAGH. The Proton donor role is filled by His-42. 300–306 contacts substrate; sequence ASTGRPR. GTP is bound by residues Arg-306, 332–334, and 414–416; these read KLD and STG.

This sequence belongs to the adenylosuccinate synthetase family. In terms of assembly, homodimer. The cofactor is Mg(2+).

The protein resides in the cytoplasm. The catalysed reaction is IMP + L-aspartate + GTP = N(6)-(1,2-dicarboxyethyl)-AMP + GDP + phosphate + 2 H(+). It participates in purine metabolism; AMP biosynthesis via de novo pathway; AMP from IMP: step 1/2. Its function is as follows. Plays an important role in the de novo pathway of purine nucleotide biosynthesis. Catalyzes the first committed step in the biosynthesis of AMP from IMP. The sequence is that of Adenylosuccinate synthetase from Xanthomonas oryzae pv. oryzae (strain PXO99A).